A 338-amino-acid polypeptide reads, in one-letter code: Cytochrome bd ubiquinol oxidase subunit 2 (338 aa).

9 helical membrane passes run 7–27, 50–70, 75–95, 119–139, 163–183, 196–216, 227–247, 256–276, and 306–326; these read LWFILVAVLFVGFFFLEGFDF, IGPFWDANEVWLLTGAGAIFA, WYATMLSGYYIPFVIVLLALM, VVFFGSLIPPFVLGVLFTTLF, ILGGVTVTLLCFQHGLMFITL, MAQKIMGVVFVAVLAFAALSA, EITIPLAVLIVICFMLAAVFI, FGMTGAGLALTVGMIFISLFP, and IAALTLLPFVIGSQIWSYYVF.

It belongs to the cytochrome ubiquinol oxidase subunit 2 family. As to quaternary structure, heterodimer of subunits I and II. The cofactor is heme b. It depends on heme d cis-diol as a cofactor.

The protein localises to the cell membrane. The catalysed reaction is 2 a ubiquinol + O2(in) + 4 H(+)(in) = 2 a ubiquinone + 2 H2O(in) + 4 H(+)(out). This is Cytochrome bd ubiquinol oxidase subunit 2 (cydB) from Bacillus subtilis (strain 168).